The primary structure comprises 395 residues: Mannan polymerase complexes subunit MNN9 (395 aa).

Over 2–17 (SLSLVSYRLRKNPWVN) the chain is Cytoplasmic. The chain crosses the membrane as a helical; Signal-anchor for type II membrane protein span at residues 18–33 (IFLPVLAIFLIYIIFF). At 34–395 (QRDQSLLGLN…LVYHIEEENH (362 aa)) the chain is on the lumenal side.

Belongs to the ANP1/MMN9/VAN1 family. In terms of assembly, the M-Pol I complex contains MNN9 and VAN1. The M-Pol II complex is composed of ANP1, MNN9, MNN10, MNN11 and HOC1.

It is found in the endoplasmic reticulum membrane. The protein resides in the golgi apparatus membrane. Its pathway is protein modification; protein glycosylation. The M-Pol I and M-Pol II complexes possess alpha-1,6-mannosyltransferase activity and are probably involved in the elongation of the mannan backbone of N-linked glycans on cell wall and periplasmic proteins. May also provide alpha-1,2-mannosyltransferase activity to the M-Pol I complex. The protein is Mannan polymerase complexes subunit MNN9 (MNN9) of Saccharomyces cerevisiae (strain ATCC 204508 / S288c) (Baker's yeast).